Here is a 647-residue protein sequence, read N- to C-terminus: Exoribonuclease 2 (647 aa).

Residues 192–519 (RIDLTSLDFV…NHRLLKAIIQ (328 aa)) form the RNB domain. Positions 564-646 (EQRFTAEIID…ETRNIVARPT (83 aa)) constitute an S1 motif domain.

It belongs to the RNR ribonuclease family. RNase II subfamily.

It localises to the cytoplasm. The enzyme catalyses Exonucleolytic cleavage in the 3'- to 5'-direction to yield nucleoside 5'-phosphates.. Involved in mRNA degradation. Hydrolyzes single-stranded polyribonucleotides processively in the 3' to 5' direction. The sequence is that of Exoribonuclease 2 from Photorhabdus laumondii subsp. laumondii (strain DSM 15139 / CIP 105565 / TT01) (Photorhabdus luminescens subsp. laumondii).